A 285-amino-acid polypeptide reads, in one-letter code: NAD kinase (285 aa).

Asp68 serves as the catalytic Proton acceptor. Residues 68 to 69, 142 to 143, Arg153, Lys170, Asp172, 183 to 188, and Gln242 contribute to the NAD(+) site; these read DG, ND, and TAYNLS.

This sequence belongs to the NAD kinase family. It depends on a divalent metal cation as a cofactor.

The protein resides in the cytoplasm. It carries out the reaction NAD(+) + ATP = ADP + NADP(+) + H(+). Functionally, involved in the regulation of the intracellular balance of NAD and NADP, and is a key enzyme in the biosynthesis of NADP. Catalyzes specifically the phosphorylation on 2'-hydroxyl of the adenosine moiety of NAD to yield NADP. This Syntrophotalea carbinolica (strain DSM 2380 / NBRC 103641 / GraBd1) (Pelobacter carbinolicus) protein is NAD kinase.